An 83-amino-acid polypeptide reads, in one-letter code: Cytochrome b559 subunit alpha (83 aa).

A helical transmembrane segment spans residues 21 to 35; sequence VIHSITIPSLFIAGW. Histidine 23 provides a ligand contact to heme.

The protein belongs to the PsbE/PsbF family. As to quaternary structure, heterodimer of an alpha subunit and a beta subunit. PSII is composed of 1 copy each of membrane proteins PsbA, PsbB, PsbC, PsbD, PsbE, PsbF, PsbH, PsbI, PsbJ, PsbK, PsbL, PsbM, PsbT, PsbX, PsbY, PsbZ, Psb30/Ycf12, at least 3 peripheral proteins of the oxygen-evolving complex and a large number of cofactors. It forms dimeric complexes. Requires heme b as cofactor.

It is found in the plastid. Its subcellular location is the chloroplast thylakoid membrane. Its function is as follows. This b-type cytochrome is tightly associated with the reaction center of photosystem II (PSII). PSII is a light-driven water:plastoquinone oxidoreductase that uses light energy to abstract electrons from H(2)O, generating O(2) and a proton gradient subsequently used for ATP formation. It consists of a core antenna complex that captures photons, and an electron transfer chain that converts photonic excitation into a charge separation. The chain is Cytochrome b559 subunit alpha from Anthoceros angustus (Hornwort).